The sequence spans 123 residues: UPF0102 protein PSHAa2523 (123 aa).

The protein belongs to the UPF0102 family.

This chain is UPF0102 protein PSHAa2523, found in Pseudoalteromonas translucida (strain TAC 125).